The following is a 722-amino-acid chain: Golgin subfamily A member 5 (722 aa).

Over 1 to 689 (MSWFTDLAGR…IFLRRYPIAR (689 aa)) the chain is Cytoplasmic. Disordered stretches follow at residues 90 to 158 (TRSS…VKPI) and 194 to 215 (TLSDSGSSASLSTTGDPKSHEL). Positions 91–109 (RSSIESSHNSSVNVSSHRS) are enriched in low complexity. The span at 134-148 (DKVHSSSQKETRKES) shows a compositional bias: basic and acidic residues. Positions 149–158 (ASVNQAVKPI) are enriched in polar residues. Residues 195 to 209 (LSDSGSSASLSTTGD) show a composition bias toward low complexity. Residues 211-622 (KSHELSNLRL…LEHQLKNVQG (412 aa)) are a coiled coil. A helical; Anchor for type IV membrane protein transmembrane segment spans residues 690–710 (VFIIIYMALLHLWVMIVLLTY). Topologically, residues 711–722 (TPEMHHDTPSGK) are lumenal.

The protein resides in the golgi apparatus membrane. In terms of biological role, involved in maintaining Golgi structure. Stimulates the formation of Golgi stacks and ribbons. Involved in intra-Golgi retrograde transport. The chain is Golgin subfamily A member 5 (golga5) from Xenopus laevis (African clawed frog).